The primary structure comprises 180 residues: Adenine phosphoribosyltransferase (180 aa).

The protein belongs to the purine/pyrimidine phosphoribosyltransferase family. In terms of assembly, homodimer.

The protein localises to the cytoplasm. The catalysed reaction is AMP + diphosphate = 5-phospho-alpha-D-ribose 1-diphosphate + adenine. It functions in the pathway purine metabolism; AMP biosynthesis via salvage pathway; AMP from adenine: step 1/1. Catalyzes a salvage reaction resulting in the formation of AMP, that is energically less costly than de novo synthesis. The sequence is that of Adenine phosphoribosyltransferase from Marinobacter nauticus (strain ATCC 700491 / DSM 11845 / VT8) (Marinobacter aquaeolei).